A 439-amino-acid polypeptide reads, in one-letter code: Xylose isomerase (439 aa).

Residues His99 and Asp102 contribute to the active site. Mg(2+) contacts are provided by Glu230, Glu266, His269, Asp294, Asp305, Asp307, and Asp337.

This sequence belongs to the xylose isomerase family. As to quaternary structure, homotetramer. It depends on Mg(2+) as a cofactor.

It is found in the cytoplasm. The catalysed reaction is alpha-D-xylose = alpha-D-xylulofuranose. In Shouchella clausii (strain KSM-K16) (Alkalihalobacillus clausii), this protein is Xylose isomerase.